Reading from the N-terminus, the 361-residue chain is Deoxyribonuclease-2-beta (361 aa).

The N-terminal stretch at 1-27 is a signal peptide; it reads MKQKMMARLLRTSFALLFLGLFGVLGA. N-linked (GlcNAc...) asparagine glycosylation is found at N81, N103, N119, and N278.

The protein belongs to the DNase II family. As to expression, highly expressed in the eye lens and in salivary gland. Detected at lower levels in lung, prostate and lymph node. Isoform 2 is lung specific.

The protein resides in the lysosome. The catalysed reaction is Endonucleolytic cleavage to nucleoside 3'-phosphates and 3'-phosphooligonucleotide end-products.. Its function is as follows. Hydrolyzes DNA under acidic conditions. Does not require divalent cations for activity. Participates in the degradation of nuclear DNA during lens cell differentiation. This is Deoxyribonuclease-2-beta (DNASE2B) from Homo sapiens (Human).